The chain runs to 280 residues: Shikimate dehydrogenase (NADP(+)) (280 aa).

Residues 19-21 and T66 each bind shikimate; that span reads SFS. The active-site Proton acceptor is K70. E82 contributes to the NADP(+) binding site. The shikimate site is built by N91 and D106. Residues 130–134 and L222 contribute to the NADP(+) site; that span reads GSGGA. Y224 is a binding site for shikimate. Residue G245 coordinates NADP(+).

Belongs to the shikimate dehydrogenase family. In terms of assembly, homodimer.

It carries out the reaction shikimate + NADP(+) = 3-dehydroshikimate + NADPH + H(+). It participates in metabolic intermediate biosynthesis; chorismate biosynthesis; chorismate from D-erythrose 4-phosphate and phosphoenolpyruvate: step 4/7. Functionally, involved in the biosynthesis of the chorismate, which leads to the biosynthesis of aromatic amino acids. Catalyzes the reversible NADPH linked reduction of 3-dehydroshikimate (DHSA) to yield shikimate (SA). The polypeptide is Shikimate dehydrogenase (NADP(+)) (Methanococcus maripaludis (strain C7 / ATCC BAA-1331)).